Here is a 46-residue protein sequence, read N- to C-terminus: Escargot/snail protein homolog (46 aa).

3 consecutive C2H2-type zinc fingers follow at residues 1-4 (IRTH), 8-30 (CKCP…TTHH), and 36-46 (FSCQHCNRAFA).

It belongs to the snail C2H2-type zinc-finger protein family.

It localises to the nucleus. The chain is Escargot/snail protein homolog from Oryzias latipes (Japanese rice fish).